The sequence spans 474 residues: Glutathione synthetase (474 aa).

A2 is modified (N-acetylalanine). R125 is a binding site for substrate. E144 serves as a coordination point for ATP. The Mg(2+) site is built by E144 and N146. Residues 148–151 (ISAS), 214–216 (ERN), Q220, and 267–270 (RDGY) each bind substrate. ATP contacts are provided by residues K305, 364–373 (KPQREGGGNN), Y375, and 398–401 (MEKT). Position 368 (E368) interacts with Mg(2+). Residue S415 is modified to Phosphoserine. E425 lines the ATP pocket. R450 serves as a coordination point for substrate. ATP-binding residues include K452 and D458. 461–462 (VA) lines the substrate pocket.

Belongs to the eukaryotic GSH synthase family. As to quaternary structure, homodimer. The cofactor is Mg(2+).

It catalyses the reaction gamma-L-glutamyl-L-cysteine + glycine + ATP = glutathione + ADP + phosphate + H(+). It participates in sulfur metabolism; glutathione biosynthesis; glutathione from L-cysteine and L-glutamate: step 2/2. Catalyzes the production of glutathione from gamma-glutamylcysteine and glycine in an ATP-dependent manner. Glutathione (gamma-glutamylcysteinylglycine, GSH) is the most abundant intracellular thiol in living aerobic cells and is required for numerous processes including the protection of cells against oxidative damage, amino acid transport, the detoxification of foreign compounds, the maintenance of protein sulfhydryl groups in a reduced state and acts as a cofactor for a number of enzymes. This is Glutathione synthetase (GSS) from Macaca fascicularis (Crab-eating macaque).